A 146-amino-acid polypeptide reads, in one-letter code: CysO-cysteine peptidase (146 aa).

One can recognise an MPN domain in the interval 11 to 134; sequence LVIRADLVNA…LRSYRIVDGA (124 aa). Positions 88, 90, and 101 each coordinate Zn(2+). A JAMM motif motif is present at residues 88–101; it reads HSHTATEAYPSRTD.

Belongs to the peptidase M67A family. Requires Zn(2+) as cofactor.

The catalysed reaction is [CysO sulfur-carrier protein]-Gly-NH-CH2-C(O)-S-L-Cys + H2O = [CysO sulfur-carrier protein]-C-terminal Gly-Gly + L-cysteine + H(+). The protein operates within amino-acid biosynthesis; L-cysteine biosynthesis. Protease that hydrolyzes the covalent CysO-cysteine adduct synthesized by CysM to release L-cysteine and regenerate CysO. The chain is CysO-cysteine peptidase (mec) from Mycobacterium bovis (strain ATCC BAA-935 / AF2122/97).